We begin with the raw amino-acid sequence, 91 residues long: uncharacterized protein (91 aa).

The next 3 helical transmembrane spans lie at 9-29, 44-64, and 71-91; these read VLWGAVIAAFILSIVFYPFLP, LTVNKLAGTVMLPVLMVVFAW, and QFVFAVYILLICHIVVLCLAL.

It localises to the cell membrane. This is an uncharacterized protein from Bacillus subtilis (strain 168).